Reading from the N-terminus, the 904-residue chain is uncharacterized protein (904 aa).

2 disordered regions span residues 247-275 (KIGK…SLEF) and 328-360 (GDSQ…HHFS). Positions 342–360 (GAQTLSPTSHPSSANHHFS) are enriched in polar residues. The chain crosses the membrane as a helical span at residues 778-798 (VVQGMILMFAGGKLIFGGRVL).

It is found in the membrane. This is an uncharacterized protein from Homo sapiens (Human).